Reading from the N-terminus, the 529-residue chain is MSPHVDMSSGSPDGAAPAVQKAFNGFLTENIDESQFPALENRSHLRYTPQDELHDMICVGFGPASLAIGVALHDALDGTDGSLADVQGLQSRPPKVAFLEKQPQFAWHAGMLLPGAKMQITFMKDMATMRNPRSEFTFLNYLHQKDRLVEFANLNTFLPARVEYEDYMKWCASWFEEVVAYSQEVVKVMPEKSASGEITSFNVMSHNHLTGRTESRRAKHVVIAAGGRPNIPAPFPTNHPRVIHSSQFSYMSKQLLKDHDAPYNIAVVGNGQSAAEIFDFLHANYPNSRTRLLIKGGALRPSDDSPFVNEIFNPSRTDCTYNRAPKLRATTLVEDKGTNYGVVRLGLLEHIYETLYMQRIRYGNSPAEEAHWPHRILPYRRVMDVTESPVCQGGVRLHVQDSSALYFSEQAGGQERKETLDVDAVFVATGYLRDLHETLLKDARHLMPGGELEGAKWQVQRDYRVNFTEKSVGEDAGVWLQGCCESTHGLSDTLLSVLATRGGEMVRSLFEKPAKWDNGHVLGGYEVRE.

Residues 100–108 (EKQPQFAWH) and Gln119 each bind FAD. Lys124 contacts substrate. Val185 is an FAD binding site. 270–273 (NGQS) is an NADP(+) binding site. Substrate is bound by residues 309 to 312 (NEIF) and Asn339. 339–341 (NYG) provides a ligand contact to NADP(+). 493–495 (TLL) is a binding site for FAD. Ser496 lines the substrate pocket.

This sequence belongs to the lysine N(6)-hydroxylase/L-ornithine N(5)-oxygenase family. In terms of assembly, homotetramer. FAD serves as cofactor.

It catalyses the reaction L-ornithine + NADPH + O2 = N(5)-hydroxy-L-ornithine + NADP(+) + H2O. The catalysed reaction is L-ornithine + NADH + O2 = N(5)-hydroxy-L-ornithine + NAD(+) + H2O. Its pathway is siderophore biosynthesis. Its function is as follows. L-ornithine N(5)-monooxygenase; part of the gene cluster that mediates the biosynthesis of hydroxamate-containing siderophores that play a critical role in virulence. Cochliobolus heterostrophus produces extracellular coprogen-type siderophores including coprogen, neocoprogen I and neocoprogen II, as well as the intracellular siderophore ferricrocin. The role of extracellular siderophores is to supply iron to their producers in planta and the intracellular ferricrocin is required for intracellular iron distribution and storage with a crucial role in ascus and ascospore development. SIDA2 catalyzes the conversion of L-ornithine to N(5)-hydroxyornithine, the first step in the biosynthesis of all hydroxamate-containing siderophores. The assembly of extracellular coprogen-type siderophores is then performed by the nonribosomal peptide synthetase (NRPS) NPS6 whereas the intracellular siderophore ferricrocin is assembled by NPS2. In Cochliobolus heterostrophus (strain C4 / ATCC 48331 / race T) (Southern corn leaf blight fungus), this protein is L-ornithine N(5)-monooxygenase.